A 433-amino-acid polypeptide reads, in one-letter code: F-box/kelch-repeat protein At1g24800 (433 aa).

The region spanning 23–71 (TSMCDLPPKLVGEKILTRIPITSLRAVRSTCKLWNALTKDRVLGKAAAQ) is the F-box domain. Kelch repeat units lie at residues 170–216 (HKIL…LYGV) and 286–337 (VLYH…RFDN).

The chain is F-box/kelch-repeat protein At1g24800 from Arabidopsis thaliana (Mouse-ear cress).